The following is a 417-amino-acid chain: Serpin H1 (417 aa).

An N-terminal signal peptide occupies residues 1 to 18 (MRSLLLLSAFCLLEAALA). Lys-94 bears the N6-succinyllysine mark. 2 N-linked (GlcNAc...) asparagine glycosylation sites follow: Asn-120 and Asn-125. Ser-141 carries the phosphoserine modification. Lys-206 bears the N6-acetyllysine mark. Position 295 is an N6-succinyllysine (Lys-295). Lys-318 carries the N6-acetyllysine modification. Positions 414-417 (RDEL) match the Prevents secretion from ER motif.

It belongs to the serpin family.

The protein resides in the endoplasmic reticulum lumen. Its function is as follows. Binds specifically to collagen. Could be involved as a chaperone in the biosynthetic pathway of collagen. In Pongo abelii (Sumatran orangutan), this protein is Serpin H1 (SERPINH1).